The following is a 353-amino-acid chain: Probable butyrate kinase (353 aa).

Belongs to the acetokinase family.

The protein localises to the cytoplasm. It catalyses the reaction butanoate + ATP = butanoyl phosphate + ADP. The sequence is that of Probable butyrate kinase from Bacteroides thetaiotaomicron (strain ATCC 29148 / DSM 2079 / JCM 5827 / CCUG 10774 / NCTC 10582 / VPI-5482 / E50).